The primary structure comprises 1373 residues: MVSLRDNIEAQPLSHNRRIRKNFGHINLVADIPNLIEIQKNSYEKNFLQLNIKDSERKNKGLQSILNSIFPISDSSNIANLEFVKYEFDTPKYDVEECSQRSLSYAAPLKVTLRLSIWDIDEDTGTREIKGIKEQEVYMGDIPLMTKNGTFIINGTERVVVSQMHRSPGVFFYHDEGKVHSSGKLLYSARVIPYRGSWLDLEFDAKDVIYFRIDRKRKLYTTTLLRAIGMSTEEIIKFYYNSVTYKLVKNKGWAVKFIPQHITAHRLTSDLVDADTGNILLKAGQKITPRLAKKYSGEGLNNILVAHETLIGKYLSEDLRDPASDEVLAKIGEMITADMLNVINDLKIKNVNVLVINPQSGPYIRNTLFADKNQDREAALCDIFRVLRPGEPANIEAAESLFYNLFFDTERYDLSEVGRIKMNSRLELNISEEVTVLTIDDIKNIVRVLVELKDGKGIIDDIDHLGNRRVRSVGELIENQFRIGLVRMEKSVIERMSAGDVDTVMPHDLVNSKILVSVVKEFFSTSQLSQFMDQTNPLSEITHKRRLSALGPGGLSRDRAGFEVRDVHPTHYGRICPIETPEGQNIGLINSMATYARINKHGFIESPYRRVKDGCVTDEVVYLSAIEEGKYKIGQANSKINKDGKLQGEFINCRVEGGNFVMVEPYEVDFIDVTPMQVVSVAASLIPFLENDDANRALMGSNMQRQAVPLIKTDAPFVGTGVEGVVAKDSGASVLALHDGIVEQVDSNRIVIRTLEQKVDGSPSVDIYNLLKFQKSNHNTCINQKPLVKVGHYVKKNDIIADGPSTDNGEIALGRNVLVAFLPWNGYNFEDSILISERIVKEDVFTSIHIEEFEVIARDTRLGPEEITRDIPNVSEEALRHLDEVGIIYIGAEVKAGDILVGKVTPKSESPITPEEKLLRAIFGEKAFDVKDSSLHVPSGVSGTVVEVRVFSRRGVEKDQRAIAIEKQQIEKFAKDRDDELEIIEHFVFSWLEKLLVGQVIINGPKQVKVGQTITTEMLKGLSKGQFWQIIVEDANVMNEIEQIKTHYDEKKEALDKRFATKVEKLQSGDDLPQGALKVVKVFIATKHKLQPGDKMAGRHGNKGVISRIVPEEDMPFLEDGTVVDIVLNPLGLPSRMNIGQILETHLGWASINLAKKISTLVKEYKNKHIGIEQIKKFLIELYGENINSILERPEEEIISFCKKVSKGVHFATPVFDGAKVQDVKDMLKLAGQDPSGQVKLIDGRTGEYFDRLVTVGQKYLLKLHHLVDNKIHSRSIGPYSLVTQQPLGGKSHFGGQRFGEMECWALQAYGAAYTLQEMLTVKSDDVNGRIKTYDSIVRGENNFESGIPESFNVMIKEFRSLCLNVKLEVTSS.

The protein belongs to the RNA polymerase beta chain family. The RNAP catalytic core consists of 2 alpha, 1 beta, 1 beta' and 1 omega subunit. When a sigma factor is associated with the core the holoenzyme is formed, which can initiate transcription.

It carries out the reaction RNA(n) + a ribonucleoside 5'-triphosphate = RNA(n+1) + diphosphate. DNA-dependent RNA polymerase catalyzes the transcription of DNA into RNA using the four ribonucleoside triphosphates as substrates. This Rickettsia conorii (strain ATCC VR-613 / Malish 7) protein is DNA-directed RNA polymerase subunit beta.